We begin with the raw amino-acid sequence, 357 residues long: Peptide chain release factor 1 (357 aa).

At glutamine 235 the chain carries N5-methylglutamine.

This sequence belongs to the prokaryotic/mitochondrial release factor family. Methylated by PrmC. Methylation increases the termination efficiency of RF1.

The protein resides in the cytoplasm. Peptide chain release factor 1 directs the termination of translation in response to the peptide chain termination codons UAG and UAA. In Alkaliphilus metalliredigens (strain QYMF), this protein is Peptide chain release factor 1.